The following is a 496-amino-acid chain: Glycerol kinase (496 aa).

Position 12 (T12) interacts with ADP. Positions 12, 13, and 14 each coordinate ATP. T12 provides a ligand contact to sn-glycerol 3-phosphate. Position 16 (R16) interacts with ADP. R82, E83, and Y134 together coordinate sn-glycerol 3-phosphate. Residues R82, E83, and Y134 each coordinate glycerol. H230 carries the phosphohistidine; by HPr modification. D244 is a binding site for sn-glycerol 3-phosphate. Glycerol is bound by residues D244 and Q245. Positions 266 and 309 each coordinate ADP. Positions 266, 309, 313, and 410 each coordinate ATP. The ADP site is built by G410 and N414.

It belongs to the FGGY kinase family. As to quaternary structure, homotetramer and homodimer (in equilibrium). The phosphoenolpyruvate-dependent sugar phosphotransferase system (PTS), including enzyme I, and histidine-containing protein (HPr) are required for the phosphorylation, which leads to the activation of the enzyme.

The enzyme catalyses glycerol + ATP = sn-glycerol 3-phosphate + ADP + H(+). It participates in polyol metabolism; glycerol degradation via glycerol kinase pathway; sn-glycerol 3-phosphate from glycerol: step 1/1. Its activity is regulated as follows. Activated by phosphorylation and inhibited by fructose 1,6-bisphosphate (FBP). Its function is as follows. Key enzyme in the regulation of glycerol uptake and metabolism. Catalyzes the phosphorylation of glycerol to yield sn-glycerol 3-phosphate. The chain is Glycerol kinase from Bacillus cytotoxicus (strain DSM 22905 / CIP 110041 / 391-98 / NVH 391-98).